Here is a 1318-residue protein sequence, read N- to C-terminus: Uromodulin-like 1 (1318 aa).

Residues 1–21 form the signal peptide; it reads MLRTSGLALLALVSAVGPSQA. Over 22–1272 the chain is Extracellular; the sequence is SGFTEKGLSL…HAEAGLGAGY (1251 aa). The region spanning 33 to 106 is the EMI domain; it reads GYQLCSHRVT…YEQLGLYCVL (74 aa). 3 disulfide bridges follow: cysteine 37–cysteine 94, cysteine 61–cysteine 70, and cysteine 93–cysteine 104. N-linked (GlcNAc...) asparagine glycosylation occurs at asparagine 89. N-linked (GlcNAc...) asparagine glycosylation occurs at asparagine 109. One can recognise a WAP domain in the interval 114-158; it reads FTSRPGACPAEGPEPSTSPCSLDIDCPGLEKCCPWSGGRYCMAPA. Asparagine 172 is a glycosylation site (N-linked (GlcNAc...) asparagine). An EGF-like 1; calcium-binding domain is found at 264–313; sequence DVNECFYEELNACSGRELCANLEGSYWCVCHQEAPATSPRKLNLEWEDCP. The region spanning 314 to 398 is the Fibronectin type-III 1 domain; the sequence is PVSDYVVLNV…TTLTIKTNAQ (85 aa). Residues asparagine 322, asparagine 335, and asparagine 417 are each glycosylated (N-linked (GlcNAc...) asparagine). Residues 396–510 form the SEA 1 domain; the sequence is NAQVFEVTIK…QGTRVQDWDE (115 aa). The 46-residue stretch at 507 to 552 folds into the EGF-like 2; calcium-binding domain; the sequence is DWDECVDSAEHDCSPAAWCINLEGSYTCQCRTTRDATPSRAGRACE. 3 disulfide bridges follow: cysteine 511-cysteine 525, cysteine 519-cysteine 534, and cysteine 536-cysteine 551. Asparagine 585 is a glycosylation site (N-linked (GlcNAc...) asparagine). The segment at 593–655 is disordered; the sequence is GYPQGTPAAG…PSPTEDPTGH (63 aa). In terms of domain architecture, Fibronectin type-III 2 spans 702 to 791; it reads VPVSIGRIMV…HLKVRTAARK (90 aa). The N-linked (GlcNAc...) asparagine glycan is linked to asparagine 713. One can recognise an SEA 2 domain in the interval 788-900; that stretch reads AARKLIGKVR…GDTFIQDYDE (113 aa). The EGF-like 3; calcium-binding domain maps to 897–938; sequence DYDECERKEDDCVPGTSCRNTLGSFTCSCEGGAPDFPVEYSE. Disulfide bonds link cysteine 901-cysteine 914 and cysteine 908-cysteine 923. The interval 938-957 is disordered; that stretch reads ERPCEGDSPGNETWATSPER. Asparagine 984 and asparagine 1050 each carry an N-linked (GlcNAc...) asparagine glycan. Residues 992–1235 enclose the ZP domain; it reads LCEIEKVVVA…ATCKINCNNF (244 aa). Cysteine 1157 and cysteine 1215 are joined by a disulfide. Residues 1273–1293 traverse the membrane as a helical segment; it reads VVLIVVAIFVLVAGTATLLIV. Over 1294 to 1318 the chain is Cytoplasmic; it reads RYQRMNGRYNFKIQSNNFSYQVFYE.

In terms of tissue distribution, isoform 4 is expressed at low level in kidney, testis and fetal thymus. Isoform 3 is expressed at low level in prostate, testis and fetal thymus.

Its subcellular location is the cell membrane. It localises to the cytoplasm. This Homo sapiens (Human) protein is Uromodulin-like 1 (UMODL1).